Here is a 383-residue protein sequence, read N- to C-terminus: BRISC and BRCA1-A complex member 2 (383 aa).

N-acetylmethionine is present on Met1. The residue at position 2 (Ser2) is a Phosphoserine. UEV-like regions lie at residues 30-147 and 275-364; these read DATN…TLLE and IAAF…RAKA.

This sequence belongs to the BABAM2 family. Component of the ARISC complex, at least composed of UIMC1/RAP80, ABRAXAS1, BRCC3/BRCC36, BABAM2 and BABAM1/NBA1. Component of the BRCA1-A complex, at least composed of BRCA1, BARD1, UIMC1/RAP80, ABRAXAS1, BRCC3/BRCC36, BABAM2 and BABAM1/NBA1. In the BRCA1-A complex, interacts directly with ABRAXAS1, BRCC3/BRCC36 and BABAM1/NBA1. Binds polyubiquitin. Component of the BRISC complex, at least composed of ABRAXAS2, BRCC3/BRCC36, BABAM2 and BABAM1/NBA1. Identified in a complex with SHMT2 and the other subunits of the BRISC complex. Component of the BRCA1/BRCA2 containing complex (BRCC), which also contains BRCA1, BRCA2, BARD1, BRCC3/BRCC36 and RAD51. BRCC is a ubiquitin E3 ligase complex that enhances cellular survival following DNA damage. May interact with FAS and TNFRSF1A.

The protein resides in the cytoplasm. The protein localises to the nucleus. Its function is as follows. Component of the BRCA1-A complex, a complex that specifically recognizes 'Lys-63'-linked ubiquitinated histones H2A and H2AX at DNA lesions sites, leading to target the BRCA1-BARD1 heterodimer to sites of DNA damage at double-strand breaks (DSBs). The BRCA1-A complex also possesses deubiquitinase activity that specifically removes 'Lys-63'-linked ubiquitin on histones H2A and H2AX. In the BRCA1-A complex, it acts as an adapter that bridges the interaction between BABAM1/NBA1 and the rest of the complex, thereby being required for the complex integrity and modulating the E3 ubiquitin ligase activity of the BRCA1-BARD1 heterodimer. Component of the BRISC complex, a multiprotein complex that specifically cleaves 'Lys-63'-linked ubiquitin in various substrates. Within the BRISC complex, acts as an adapter that bridges the interaction between BABAM1/NBA1 and the rest of the complex, thereby being required for the complex integrity. The BRISC complex is required for normal mitotic spindle assembly and microtubule attachment to kinetochores via its role in deubiquitinating NUMA1. The BRISC complex plays a role in interferon signaling via its role in the deubiquitination of the interferon receptor IFNAR1; deubiquitination increases IFNAR1 activity by enhancing its stability and cell surface expression. Down-regulates the response to bacterial lipopolysaccharide (LPS) via its role in IFNAR1 deubiquitination. May play a role in homeostasis or cellular differentiation in cells of neural, epithelial and germline origins. May also act as a death receptor-associated anti-apoptotic protein, which inhibits the mitochondrial apoptotic pathway. May regulate TNF-alpha signaling through its interactions with TNFRSF1A; however these effects may be indirect. This is BRISC and BRCA1-A complex member 2 (BABAM2) from Pongo abelii (Sumatran orangutan).